The sequence spans 608 residues: Probable potassium transport system protein Kup (608 aa).

12 consecutive transmembrane segments (helical) span residues 9 to 29 (LSGV…TSPL), 46 to 66 (PAAI…VVSV), 99 to 119 (TPVL…EVVI), 137 to 157 (PSLD…LFAI), 165 to 185 (VGKL…VLGL), 213 to 233 (TSFF…ALYA), 247 to 267 (WFVV…ALLL), 285 to 305 (ALLP…QAVI), 337 to 357 (IYIP…IMSF), 363 to 383 (LAAA…ILFC), 396 to 416 (LVAA…AANL), and 419 to 439 (IFSG…LMTS).

This sequence belongs to the HAK/KUP transporter (TC 2.A.72) family.

It is found in the cell inner membrane. It carries out the reaction K(+)(in) + H(+)(in) = K(+)(out) + H(+)(out). Transport of potassium into the cell. Likely operates as a K(+):H(+) symporter. The protein is Probable potassium transport system protein Kup of Aeromonas salmonicida (strain A449).